The primary structure comprises 153 residues: Small ribosomal subunit protein uS13 (153 aa).

Positions 129 to 153 are disordered; it reads RGQRTKSTFRHGSSVGVSRTRPTGN. Residues 143–153 show a composition bias toward polar residues; that stretch reads VGVSRTRPTGN.

Belongs to the universal ribosomal protein uS13 family. Part of the 30S ribosomal subunit. Forms a loose heterodimer with protein S19. Forms two bridges to the 50S subunit in the 70S ribosome.

Located at the top of the head of the 30S subunit, it contacts several helices of the 16S rRNA. In the 70S ribosome it contacts the 23S rRNA (bridge B1a) and protein L5 of the 50S subunit (bridge B1b), connecting the 2 subunits; these bridges are implicated in subunit movement. The polypeptide is Small ribosomal subunit protein uS13 (Methanosphaera stadtmanae (strain ATCC 43021 / DSM 3091 / JCM 11832 / MCB-3)).